A 37-amino-acid polypeptide reads, in one-letter code: Large ribosomal subunit protein bL36c (37 aa).

This sequence belongs to the bacterial ribosomal protein bL36 family.

It localises to the plastid. It is found in the chloroplast. The protein is Large ribosomal subunit protein bL36c of Vitis vinifera (Grape).